We begin with the raw amino-acid sequence, 288 residues long: Ankyrin repeat and SOCS box protein 8 (288 aa).

S17 bears the Phosphoserine mark. 4 ANK repeats span residues 52-81 (GTLKPLHCACMVSDADCVELLLEKGAEVNA), 85-113 (YNRTALHYAAEKDEACVEVLLEYGANPNA), 117-146 (NRDTPLHWAAFKNNAECVRALLESGASVNA), and 150-179 (NNDTPLSWAAMKGNLESVSILLDYGAEVRV). The SOCS box domain occupies 235-288 (QLCEKLTVLCSAPGTLKTLARYTVRRSLGLQYLPDAVKGLPLPASLKEYLLLLE).

The protein belongs to the ankyrin SOCS box (ASB) family. In terms of assembly, interacts with TBK1; this interaction promotes TBK1 proteasomal degradation. Post-translationally, phosphorylated by TBK1.

It localises to the cytoplasm. The protein operates within protein modification; protein ubiquitination. May be a substrate-recognition component of a SCF-like ECS (Elongin-Cullin-SOCS-box protein) E3 ubiquitin-protein ligase complex which mediates the ubiquitination and subsequent proteasomal degradation of target proteins. Inhibits IFN-beta production through the IRF3 signaling pathway by targeting TBK1 via 'Lys-48'-linked ubiquitination, leading to its proteasomal degradation. The polypeptide is Ankyrin repeat and SOCS box protein 8 (ASB8) (Pongo abelii (Sumatran orangutan)).